The chain runs to 219 residues: MEDYKLLQLETATVDAQAPPLPTKTVPVFAPPLSTPPQPNELVYTKRRRTKRKAKCRCLFFTMGMFALGVLMTTAILVSTFILTVPIGALRTAPCPAETFGLGDECVRPVLLNASSNTRNISGVGAVCEEYSEMAASNGTAGLIMSLLDCLNVGDSESVMNKLNLDDTQLAYCNVPSFAECYTKGFGVCYAARPLSPLGELIYKARQALRLDHIIPFPR.

The Intravirion segment spans residues 1-57 (MEDYKLLQLETATVDAQAPPLPTKTVPVFAPPLSTPPQPNELVYTKRRRTKRKAKCR). A helical; Signal-anchor for type II membrane protein transmembrane segment spans residues 58–78 (CLFFTMGMFALGVLMTTAILV). Over 79–219 (STFILTVPIG…RLDHIIPFPR (141 aa)) the chain is Virion surface. N-linked (GlcNAc...) asparagine; by host glycans are attached at residues Asn113, Asn120, and Asn138.

Belongs to the herpesviridae HHV-1 UL45 family. N-glycosylated.

The protein resides in the virion membrane. The protein is Envelope protein UL45 homolog of Equine herpesvirus 1 (strain Ab4p) (EHV-1).